The primary structure comprises 293 residues: Ribonuclease HIII (293 aa).

The RNase H type-2 domain occupies 78 to 293; that stretch reads LPLIGTDEVG…TEKAKKRLER (216 aa). Aspartate 84, glutamate 85, and aspartate 187 together coordinate a divalent metal cation.

This sequence belongs to the RNase HII family. RnhC subfamily. Mn(2+) is required as a cofactor. Mg(2+) serves as cofactor.

The protein resides in the cytoplasm. The catalysed reaction is Endonucleolytic cleavage to 5'-phosphomonoester.. Endonuclease that specifically degrades the RNA of RNA-DNA hybrids. This is Ribonuclease HIII from Streptococcus pneumoniae serotype 19F (strain G54).